The following is a 206-amino-acid chain: Ribosomal RNA small subunit methyltransferase G (206 aa).

Residues Gly-74, Leu-79, 125–126, and Arg-140 contribute to the S-adenosyl-L-methionine site; that span reads VE.

Belongs to the methyltransferase superfamily. RNA methyltransferase RsmG family.

Its subcellular location is the cytoplasm. It carries out the reaction guanosine(527) in 16S rRNA + S-adenosyl-L-methionine = N(7)-methylguanosine(527) in 16S rRNA + S-adenosyl-L-homocysteine. In terms of biological role, specifically methylates the N7 position of guanine in position 527 of 16S rRNA. The sequence is that of Ribosomal RNA small subunit methyltransferase G from Shewanella putrefaciens (strain CN-32 / ATCC BAA-453).